A 633-amino-acid polypeptide reads, in one-letter code: Extracellular metalloproteinase 5 (633 aa).

The N-terminal stretch at 1-21 is a signal peptide; it reads MHGLLLAAAGLLSLPLHVIAH. A propeptide spanning residues 22 to 245 is cleaved from the precursor; it reads PQPSTNLAGR…HNVVDYVSHA (224 aa). Asparagine 286 carries an N-linked (GlcNAc...) asparagine glycan. Histidine 428 contributes to the Zn(2+) binding site. Glutamate 429 is an active-site residue. Histidine 432 provides a ligand contact to Zn(2+). N-linked (GlcNAc...) asparagine glycans are attached at residues asparagine 592 and asparagine 621.

Belongs to the peptidase M36 family. Zn(2+) is required as a cofactor.

It localises to the secreted. Functionally, secreted metalloproteinase probably acting as a virulence factor. The chain is Extracellular metalloproteinase 5 (MEP5) from Arthroderma benhamiae (Trichophyton mentagrophytes).